Here is a 227-residue protein sequence, read N- to C-terminus: Small ribosomal subunit protein uS3 (227 aa).

The KH type-2 domain maps to 39 to 107 (VREFLMKKLE…PVHINIEEIR (69 aa)).

It belongs to the universal ribosomal protein uS3 family. In terms of assembly, part of the 30S ribosomal subunit. Forms a tight complex with proteins S10 and S14.

In terms of biological role, binds the lower part of the 30S subunit head. Binds mRNA in the 70S ribosome, positioning it for translation. This Hahella chejuensis (strain KCTC 2396) protein is Small ribosomal subunit protein uS3.